The following is a 486-amino-acid chain: Galactose-1-phosphate uridylyltransferase (486 aa).

This sequence belongs to the galactose-1-phosphate uridylyltransferase type 2 family.

Its subcellular location is the cytoplasm. The enzyme catalyses alpha-D-galactose 1-phosphate + UDP-alpha-D-glucose = alpha-D-glucose 1-phosphate + UDP-alpha-D-galactose. It participates in carbohydrate metabolism; galactose metabolism. The chain is Galactose-1-phosphate uridylyltransferase from Lacticaseibacillus casei (strain BL23) (Lactobacillus casei).